Consider the following 204-residue polypeptide: Large ribosomal subunit protein uL4 (204 aa).

The interval 53–73 (AFVSGGGKKPWRQKGRGGARA) is disordered.

Belongs to the universal ribosomal protein uL4 family. In terms of assembly, part of the 50S ribosomal subunit.

One of the primary rRNA binding proteins, this protein initially binds near the 5'-end of the 23S rRNA. It is important during the early stages of 50S assembly. It makes multiple contacts with different domains of the 23S rRNA in the assembled 50S subunit and ribosome. Its function is as follows. Forms part of the polypeptide exit tunnel. The sequence is that of Large ribosomal subunit protein uL4 from Campylobacter concisus (strain 13826).